The following is a 615-amino-acid chain: Sodium-dependent noradrenaline transporter (615 aa).

A disordered region spans residues 1 to 28; that stretch reads MLLARMNPQVQPENGGAGPGSEQPPRKR. At 1–60 the chain is on the cytoplasmic side; that stretch reads MLLARMNPQVQPENGGAGPGSEQPPRKRKEVLVVKERNGVQCLLASRDGDEQPRETWGKK. Residues 61-86 traverse the membrane as a helical segment; that stretch reads IDFLLSVVGFAVDLANVWRFPYLCYK. Na(+) contacts are provided by Gly-69, Ala-71, and Val-72. Residue Asp-73 participates in (R)-noradrenaline binding. Asp-73 contacts dopamine. Asn-76 contributes to the Na(+) binding site. 2 residues coordinate (R)-noradrenaline: Tyr-85 and Lys-86. Residues 87-90 are Extracellular-facing; the sequence is NGGG. A helical transmembrane segment spans residues 91–114; that stretch reads AFLIPYTLFLIIAGMPLFYMELAL. The Cytoplasmic portion of the chain corresponds to 115 to 133; sequence GQYNREGAATVWKICPFFK. Residues 134–164 form a helical membrane-spanning segment; the sequence is GVGYAVILIALYVGFYYNVIIAWSLYYLFSS. (R)-noradrenaline-binding residues include Ala-143 and Gly-147. Residue Ala-143 coordinates dopamine. Residues 165–231 lie on the Extracellular side of the membrane; it reads FTPTLPWTDC…SSGIHDIGLP (67 aa). Cys-174 and Cys-183 are oxidised to a cystine. Residues Asn-182, Asn-190, and Asn-196 are each glycosylated (N-linked (GlcNAc...) asparagine). Residues 232–252 form a helical membrane-spanning segment; it reads QWQLLLCLIIVVIVLFFSLWK. Residues 253 to 255 are Cytoplasmic-facing; sequence GVK. Residues 256-280 traverse the membrane as a helical segment; sequence TSGKVVWITATLPYLVLFVLLVHGI. The Extracellular portion of the chain corresponds to 281–304; that stretch reads TLPGASNGINAYLHIDFYRLKEAT. Residues 305–330 traverse the membrane as a helical segment; sequence VWIDAATQIFFSLGAGFGVLIAFASY. A (R)-noradrenaline-binding site is contributed by Phe-315. Dopamine is bound at residue Phe-315. Ser-316 serves as a coordination point for Na(+). At 331-336 the chain is on the cytoplasmic side; it reads NKFDNN. A helical transmembrane segment spans residues 337–360; that stretch reads CYRDALLTSTINCVTSFISGFAIF. Residue Asn-348 coordinates Na(+). Topologically, residues 361 to 400 are extracellular; it reads SILGYMAHEHKVNIEDVATEGAGLVFILYPEAISTLSGST. Glu-380 provides a ligand contact to (R)-noradrenaline. Residue Glu-380 participates in dopamine binding. Residues 401 to 426 form a helical membrane-spanning segment; the sequence is FWAIVFFIMLLALGIDSSMGGMEAVI. Positions 416 and 417 each coordinate Na(+). The Cytoplasmic portion of the chain corresponds to 427–441; that stretch reads TGLADDFQVLKRHRK. A helical transmembrane segment spans residues 442–462; that stretch reads LFTFAVSFGTFLLALFCITKG. Gly-463 is a topological domain (extracellular). A helical membrane pass occupies residues 464–490; sequence IYVLTLLDTFAAGTSILFAVLMEAIGV. Over 491–520 the chain is Cytoplasmic; the sequence is SWFYGVDRFSNDIQQMMGFKPGLYWRLCWK. The helical transmembrane segment at 521-543 threads the bilayer; that stretch reads FVSPAFLLFVVIVSIINFKPLTY. Topologically, residues 544–546 are extracellular; that stretch reads DDY. A helical membrane pass occupies residues 547 to 567; sequence IFPLWANWVGWGIAGSSMVLV. Topologically, residues 568–615 are cytoplasmic; it reads PAYIVYKFFSTRGSIRERLAYGITPASEHHLVAQRDIRQFQLQHWLAI.

Belongs to the sodium:neurotransmitter symporter (SNF) (TC 2.A.22) family. SLC6A2 subfamily. In terms of assembly, monomer. Can form homodimers in the cell membrane; homodimerization is mostly mediated by cholesterol and lipids, and regulates neurotransmitter transport activity. Interacts with PRKCABP. In terms of processing, palmitoylated. Palmitoylation regulates protein levels and neurotransmitter transport.

It localises to the cell membrane. The protein localises to the cell projection. It is found in the axon. Its subcellular location is the synapse. The protein resides in the synaptosome. It catalyses the reaction (R)-noradrenaline(out) + chloride(out) + Na(+)(out) = (R)-noradrenaline(in) + chloride(in) + Na(+)(in). The catalysed reaction is dopamine(out) + chloride(out) + Na(+)(out) = dopamine(in) + chloride(in) + Na(+)(in). It carries out the reaction dopamine(out) + chloride(out) + 2 Na(+)(out) = dopamine(in) + chloride(in) + 2 Na(+)(in). Inhibited by nisoxetine, oxaprotiline and desipramin. Mediates sodium- and chloride-dependent transport of norepinephrine (also known as noradrenaline), the primary signaling neurotransmitter in the autonomic sympathetic nervous system. Is responsible for norepinephrine re-uptake and clearance from the synaptic cleft, thus playing a crucial role in norepinephrine inactivation and homeostasis. Can also mediate sodium- and chloride-dependent transport of dopamine. The polypeptide is Sodium-dependent noradrenaline transporter (SLC6A2) (Bos taurus (Bovine)).